The primary structure comprises 865 residues: Adenylate cyclase (865 aa).

Positions 1-540 are catalytic; the sequence is MYLYIETLKQ…DISSHFPIRL (540 aa). Residues 546–865 are regulatory; that stretch reads KALYSPCEIR…FNDYQAVHHH (320 aa).

The protein belongs to the adenylyl cyclase class-1 family.

The protein localises to the cytoplasm. The catalysed reaction is ATP = 3',5'-cyclic AMP + diphosphate. In Proteus mirabilis, this protein is Adenylate cyclase (cya).